The primary structure comprises 241 residues: uncharacterized protein (241 aa).

This is an uncharacterized protein from Ictaluridae (bullhead catfishes).